A 123-amino-acid polypeptide reads, in one-letter code: N(4)-acetylcytidine amidohydrolase (123 aa).

The ASCH domain maps to 6–101 (ITFYQRFEAD…EIIFWVIQFS (96 aa)). The Proton acceptor role is filled by Lys-21. Ser-24 functions as the Nucleophile in the catalytic mechanism. Glu-74 serves as the catalytic Proton donor.

Belongs to the N(4)-acetylcytidine amidohydrolase family.

The catalysed reaction is N(4)-acetylcytidine + H2O = cytidine + acetate + H(+). It carries out the reaction N(4)-acetyl-2'-deoxycytidine + H2O = 2'-deoxycytidine + acetate + H(+). The enzyme catalyses N(4)-acetylcytosine + H2O = cytosine + acetate + H(+). In terms of biological role, catalyzes the hydrolysis of N(4)-acetylcytidine (ac4C). The chain is N(4)-acetylcytidine amidohydrolase from Haemophilus influenzae (strain ATCC 51907 / DSM 11121 / KW20 / Rd).